Here is a 273-residue protein sequence, read N- to C-terminus: 3-methyl-2-oxobutanoate hydroxymethyltransferase (273 aa).

2 residues coordinate Mg(2+): D53 and D92. 3-methyl-2-oxobutanoate contacts are provided by residues 53-54 (DS), D92, and K122. E124 is a Mg(2+) binding site. E191 (proton acceptor) is an active-site residue.

It belongs to the PanB family. Homodecamer; pentamer of dimers. The cofactor is Mg(2+).

The protein localises to the cytoplasm. The catalysed reaction is 3-methyl-2-oxobutanoate + (6R)-5,10-methylene-5,6,7,8-tetrahydrofolate + H2O = 2-dehydropantoate + (6S)-5,6,7,8-tetrahydrofolate. The protein operates within cofactor biosynthesis; (R)-pantothenate biosynthesis; (R)-pantoate from 3-methyl-2-oxobutanoate: step 1/2. Catalyzes the reversible reaction in which hydroxymethyl group from 5,10-methylenetetrahydrofolate is transferred onto alpha-ketoisovalerate to form ketopantoate. This is 3-methyl-2-oxobutanoate hydroxymethyltransferase from Bacteroides thetaiotaomicron (strain ATCC 29148 / DSM 2079 / JCM 5827 / CCUG 10774 / NCTC 10582 / VPI-5482 / E50).